The primary structure comprises 123 residues: cAMP-responsive element-binding protein-like 2 (123 aa).

The interval methionine 1 to isoleucine 24 is disordered. Residues lysine 10 to proline 21 show a composition bias toward basic residues. Residues lysine 23–serine 86 form the bZIP domain. The basic motif stretch occupies residues lysine 29–arginine 60. The leucine-zipper stretch occupies residues isoleucine 62–leucine 69. The tract at residues leucine 92–asparagine 123 is disordered. Polar residues predominate over residues aspartate 114–asparagine 123.

Belongs to the bZIP family. ATF subfamily. As to quaternary structure, interacts with CREB1; regulates CREB1 phosphorylation, stability and transcriptional activity. In terms of processing, phosphorylated by AMPK. Widely expressed with higher expression in adipose tissue, skeletal muscle, and liver (at protein level).

The protein resides in the nucleus. Its function is as follows. Probable regulator of CREB1 transcriptional activity which is involved in adipose cells differentiation. May also play a regulatory role in the cell cycle. The protein is cAMP-responsive element-binding protein-like 2 (Crebl2) of Mus musculus (Mouse).